Here is a 560-residue protein sequence, read N- to C-terminus: Membrane-bound O-acyltransferase GUP1 (560 aa).

Topologically, residues 1–43 (MSLISILSPLITSEGLDSRIKPSPKKDASTTTKPSLWKTTEFK) are extracellular. A helical membrane pass occupies residues 44–64 (FYYIAFLVVVPLMFYAGLQAS). Topologically, residues 65-101 (SPENPNYARYERLLSQGWLFGRKVDNSDSQYRFFRDN) are cytoplasmic. A helical membrane pass occupies residues 102-122 (FALLSVLMLVHTSIKRIVLYS). Residues 123-131 (TNITKLRFD) are Extracellular-facing. The helical transmembrane segment at 132–152 (LIFGLIFLVAAHGVNSIRILA) threads the bilayer. At 153-165 (HMLILYAIAHVLK) the chain is on the cytoplasmic side. Residues 166–185 (NFRRIATISIWIYGISTLFI) traverse the membrane as a helical segment. At 186 to 276 (NDNFRAYPFG…AAHPIQDYSL (91 aa)) the chain is on the extracellular side. A helical membrane pass occupies residues 277–297 (MNYIAYVTYTPLFIAGPIITF). At 298-322 (NDYVYQSKHTLPSINFKFIFYYAVR) the chain is on the cytoplasmic side. Residues 323-343 (FVIALLSMEFILHFLHVVAIS) traverse the membrane as a helical segment. The Extracellular segment spans residues 344–352 (KTKAWENDT). A helical transmembrane segment spans residues 353-373 (PFQISMIGLFNLNIIWLKLLI). Topologically, residues 374–432 (PWRLFRLWALLDGIDTPENMIRCVDNNYSSLAFWRAWHRSYNKWVVRYIYIPLGGSKNR) are cytoplasmic. The next 2 membrane-spanning stretches (helical) occupy residues 433–453 (VLTS…ELKL) and 454–474 (LLWG…TQIF). Residue His-447 is part of the active site. The Cytoplasmic portion of the chain corresponds to 475–485 (SHYTDAVWYRH). Residues 486–506 (VCAVGAVFNIWVMMIANLFGF) form a helical membrane-spanning segment. Residues 507-526 (CLGSDGTKKLLSDMFCTVSG) lie on the Extracellular side of the membrane. A helical membrane pass occupies residues 527–547 (FKFVILASVSLFIAVQIMFEI). At 548-560 (REEEKRHGIYLKC) the chain is on the cytoplasmic side.

The protein belongs to the membrane-bound acyltransferase family. As to quaternary structure, interacts with mitochondrial outer membrane voltage-dependent anion channel (VDAC) POR1.

It localises to the cell membrane. The protein localises to the endoplasmic reticulum membrane. It is found in the mitochondrion membrane. In terms of biological role, membrane-bound O-acyltransferase involved in the remodeling of glycosylphosphatidylinositol (GPI) anchors. Acts only on GPI-anchored proteins, but not on free GPI lipids. Acts as an acyltransferase for GPI anchors that adds C26 fatty acids to the sn2 position of lyso-PI-containing GPI anchors. PER1 first deacylates, GUP1 subsequently reacylates the anchor lipid, thus replacing a shorter fatty acid (C16:0 or C18:0) by C26:0. Also involved in lipid metabolism, having profound effects on sphingolipid-sterol-ordered domains integrity and assembly. Together with GUP2, has an influence on the chemical composition of the yeast extracellular matrix (yECM) in yeast multicellular aggregates, such as biofilms and colonies. Involved in cell integrity and apoptosis. The polypeptide is Membrane-bound O-acyltransferase GUP1 (GUP1) (Saccharomyces cerevisiae (strain ATCC 204508 / S288c) (Baker's yeast)).